The sequence spans 148 residues: Photosystem I reaction center subunit XI (148 aa).

3 consecutive transmembrane segments (helical) span residues 48–68, 73–93, and 122–142; these read LEIG…LGPL, IGLL…TLGL, and GGFF…LSSI.

It belongs to the PsaL family.

It localises to the plastid. The protein localises to the chloroplast thylakoid membrane. The protein is Photosystem I reaction center subunit XI of Thalassiosira pseudonana (Marine diatom).